The primary structure comprises 211 residues: Imidazole glycerol phosphate synthase subunit HisH (211 aa).

Residues 1–206 (MIGIIDYGRG…GKWVNEDATV (206 aa)) form the Glutamine amidotransferase type-1 domain. The active-site Nucleophile is Cys79. Active-site residues include His181 and Glu183.

Heterodimer of HisH and HisF.

It localises to the cytoplasm. It catalyses the reaction 5-[(5-phospho-1-deoxy-D-ribulos-1-ylimino)methylamino]-1-(5-phospho-beta-D-ribosyl)imidazole-4-carboxamide + L-glutamine = D-erythro-1-(imidazol-4-yl)glycerol 3-phosphate + 5-amino-1-(5-phospho-beta-D-ribosyl)imidazole-4-carboxamide + L-glutamate + H(+). The catalysed reaction is L-glutamine + H2O = L-glutamate + NH4(+). It functions in the pathway amino-acid biosynthesis; L-histidine biosynthesis; L-histidine from 5-phospho-alpha-D-ribose 1-diphosphate: step 5/9. Its function is as follows. IGPS catalyzes the conversion of PRFAR and glutamine to IGP, AICAR and glutamate. The HisH subunit catalyzes the hydrolysis of glutamine to glutamate and ammonia as part of the synthesis of IGP and AICAR. The resulting ammonia molecule is channeled to the active site of HisF. This Desulfitobacterium hafniense (strain Y51) protein is Imidazole glycerol phosphate synthase subunit HisH.